Here is a 122-residue protein sequence, read N- to C-terminus: MAKKGNISSRNLRISDQIQKELAEMIQREIRDPRLGLVTLQSVALTPDYAHAKVYFTVLGAEPEVAAAILKEKAGYLHSLLFKRLHIHTVPTLHFHHDTSVEHAIEMSKLINEANATRSKDD.

It belongs to the RbfA family. In terms of assembly, monomer. Binds 30S ribosomal subunits, but not 50S ribosomal subunits or 70S ribosomes.

The protein localises to the cytoplasm. One of several proteins that assist in the late maturation steps of the functional core of the 30S ribosomal subunit. Associates with free 30S ribosomal subunits (but not with 30S subunits that are part of 70S ribosomes or polysomes). Required for efficient processing of 16S rRNA. May interact with the 5'-terminal helix region of 16S rRNA. The protein is Ribosome-binding factor A of Cupriavidus pinatubonensis (strain JMP 134 / LMG 1197) (Cupriavidus necator (strain JMP 134)).